The following is a 785-amino-acid chain: Conidiophore development regulator abaA (785 aa).

Residues 1–22 (MAEWQTECMLPPTQPGFEGVGP) form a disordered region. The segment at residues 130-204 (GKDGEPVWSD…QVLDSFLKGD (75 aa)) is a DNA-binding region (TEA). The interval 213–232 (EQPADRSNGQPPSAGPRWRN) is disordered.

It belongs to the TEC1 family.

Its subcellular location is the nucleus. BrlA, abaA and wetA are pivotal regulators of conidiophore development and conidium maturation. They act individually and together to regulate their own expression and that of numerous other sporulation-specific genes. Binds to the sequence 5'-CATTCY-3', where Y is a pyrimidine, making both major- and minor-groove contacts. Controls expression of wetA. The sequence is that of Conidiophore development regulator abaA from Aspergillus oryzae (strain ATCC 42149 / RIB 40) (Yellow koji mold).